We begin with the raw amino-acid sequence, 328 residues long: Small ribosomal subunit protein bS1A (328 aa).

S1 motif domains lie at 31 to 100 (GDIV…LSIR), 118 to 182 (DATV…LSHR), and 196 to 264 (AQVV…LSTK). The tract at residues 298–328 (EAQGIPYEPPTSVDDTDDEEDESLAVSAVDE) is disordered. The segment covering 311–328 (DDTDDEEDESLAVSAVDE) has biased composition (acidic residues).

The protein belongs to the bacterial ribosomal protein bS1 family.

In terms of biological role, binds mRNA. The polypeptide is Small ribosomal subunit protein bS1A (rps1A) (Synechocystis sp. (strain ATCC 27184 / PCC 6803 / Kazusa)).